The following is a 399-amino-acid chain: Vitamin K-dependent protein Z (399 aa).

The signal sequence occupies residues 1-22 (MAGCILLLRGFILTLILHQVEL). Positions 23 to 40 (SVFLPAPKANNVLRRWRR) are excised as a propeptide. Residues 41 to 86 (GSSYFLEEIFQGNLEKECYEEVCNYEEAREVFENDVITDEFWRQYG) form the Gla domain. Residues Glu47, Glu48, Glu55, Glu57, Glu60, Glu61, Glu66, Glu67, Glu70, Glu73, and Glu80 each carry the 4-carboxyglutamate modification. Cys58 and Cys63 are joined by a disulfide. 2 consecutive EGF-like domains span residues 87–123 (GGSPCVSQPCLNNGTCEDHIRSYSCTCSPGYEGKTCA) and 125–166 (AKNE…KSCG). 7 disulfide bridges follow: Cys91–Cys102, Cys96–Cys111, Cys113–Cys122, Cys129–Cys141, Cys137–Cys150, Cys152–Cys165, and Cys208–Cys224. The N-linked (GlcNAc...) asparagine glycan is linked to Asn99. Asp104 carries the (3R)-3-hydroxyaspartate modification. The 228-residue stretch at 172-399 (ACGALTSEHI…YSMWFKQIMK (228 aa)) folds into the Peptidase S1 domain. Residues Asn230, Asn305, and Asn331 are each glycosylated (N-linked (GlcNAc...) asparagine). Cys326 and Cys340 are joined by a disulfide.

This sequence belongs to the peptidase S1 family. In terms of processing, the iron and 2-oxoglutarate dependent 3-hydroxylation of aspartate and asparagine is (R) stereospecific within EGF domains. Plasma.

Its subcellular location is the secreted. Its function is as follows. Appears to assist hemostasis by binding thrombin and promoting its association with phospholipid vesicles. Inhibits activity of the coagulation protease factor Xa in the presence of SERPINA10, calcium and phospholipids. This Mus musculus (Mouse) protein is Vitamin K-dependent protein Z (Proz).